Here is a 322-residue protein sequence, read N- to C-terminus: CPX chromosomal region candidate gene 1 protein homolog (322 aa).

2 stretches are compositionally biased toward polar residues: residues 1–23 (MTSS…NETP) and 37–78 (TNIS…TQND). The interval 1-83 (MTSSNQGNDP…MTQNDPPDEE (83 aa)) is disordered.

The protein is CPX chromosomal region candidate gene 1 protein homolog (Cpxcr1) of Mus musculus (Mouse).